We begin with the raw amino-acid sequence, 311 residues long: tRNA-cytidine(32) 2-sulfurtransferase (311 aa).

The disordered stretch occupies residues 18–38; it reads KVGADHGPSEENGSSHPLFDN. The PP-loop motif signature appears at 77 to 82; that stretch reads SGGKDS. The [4Fe-4S] cluster site is built by Cys152, Cys155, and Cys243.

The protein belongs to the TtcA family. As to quaternary structure, homodimer. Mg(2+) is required as a cofactor. The cofactor is [4Fe-4S] cluster.

Its subcellular location is the cytoplasm. The enzyme catalyses cytidine(32) in tRNA + S-sulfanyl-L-cysteinyl-[cysteine desulfurase] + AH2 + ATP = 2-thiocytidine(32) in tRNA + L-cysteinyl-[cysteine desulfurase] + A + AMP + diphosphate + H(+). It participates in tRNA modification. Functionally, catalyzes the ATP-dependent 2-thiolation of cytidine in position 32 of tRNA, to form 2-thiocytidine (s(2)C32). The sulfur atoms are provided by the cysteine/cysteine desulfurase (IscS) system. The protein is tRNA-cytidine(32) 2-sulfurtransferase of Agrobacterium fabrum (strain C58 / ATCC 33970) (Agrobacterium tumefaciens (strain C58)).